We begin with the raw amino-acid sequence, 159 residues long: Immunoglobulin J chain (159 aa).

A signal peptide spans 1–22 (MKNHLLFWGVLAVFIKAVHVKA). The residue at position 23 (glutamine 23) is a Pyrrolidone carboxylic acid. 3 disulfides stabilise this stretch: cysteine 35/cysteine 123, cysteine 94/cysteine 114, and cysteine 131/cysteine 156. Residue asparagine 71 is glycosylated (N-linked (GlcNAc...) (complex) asparagine).

In terms of assembly, part of the secretory IgA (sIgA) complex that consists of two, four or five IgA monomers, and two additional non-Ig polypeptides, namely the JCHAIN and the secretory component (the proteolytic product of PIGR). Part of the secretory IgM (sIgM) complex that consists of five IgM monomers, and two additional non-Ig polypeptides, namely the JCHAIN and the secretory component (the proteolytic product of PIGR). JCHAIN-containing IgM interacts (via CH4 domain) with FCRM (via Ig-like domain).

It is found in the secreted. Its function is as follows. Serves to link two monomer units of either IgM or IgA. In the case of IgM, the J chain-joined dimer is a nucleating unit for the IgM pentamer, and in the case of IgA it induces dimers and/or larger polymers. It also helps to bind these immunoglobulins to secretory component. This is Immunoglobulin J chain from Homo sapiens (Human).